The sequence spans 676 residues: DNA ligase (676 aa).

Over residues 1–10 the composition is skewed to basic and acidic residues; sequence MTQAHHDDAG. The interval 1–23 is disordered; sequence MTQAHHDDAGARNALQGGLATDP. NAD(+) contacts are provided by residues 52-56 and 95-96; these read DAAFD and SL. Lys-148 (N6-AMP-lysine intermediate) is an active-site residue. NAD(+) contacts are provided by Arg-169, Glu-203, and Lys-330. Residues Cys-420, Cys-423, Cys-436, and Cys-441 each contribute to the Zn(2+) site. A BRCT domain is found at 593–676; it reads EAEGPLAGLT…DKLIAERRGG (84 aa).

This sequence belongs to the NAD-dependent DNA ligase family. LigA subfamily. It depends on Mg(2+) as a cofactor. Mn(2+) serves as cofactor.

The catalysed reaction is NAD(+) + (deoxyribonucleotide)n-3'-hydroxyl + 5'-phospho-(deoxyribonucleotide)m = (deoxyribonucleotide)n+m + AMP + beta-nicotinamide D-nucleotide.. Its function is as follows. DNA ligase that catalyzes the formation of phosphodiester linkages between 5'-phosphoryl and 3'-hydroxyl groups in double-stranded DNA using NAD as a coenzyme and as the energy source for the reaction. It is essential for DNA replication and repair of damaged DNA. The polypeptide is DNA ligase (Sorangium cellulosum (strain So ce56) (Polyangium cellulosum (strain So ce56))).